We begin with the raw amino-acid sequence, 309 residues long: Tagatose-6-phosphate kinase (309 aa).

It belongs to the carbohydrate kinase PfkB family. LacC subfamily.

It catalyses the reaction D-tagatofuranose 6-phosphate + ATP = D-tagatofuranose 1,6-bisphosphate + ADP + H(+). Its pathway is carbohydrate metabolism; D-tagatose 6-phosphate degradation; D-glyceraldehyde 3-phosphate and glycerone phosphate from D-tagatose 6-phosphate: step 1/2. The chain is Tagatose-6-phosphate kinase from Streptococcus pyogenes serotype M12 (strain MGAS2096).